The primary structure comprises 202 residues: Holliday junction branch migration complex subunit RuvA (202 aa).

The interval 1 to 65 is domain I; the sequence is MIGYLEGRVV…EDALELFGFA (65 aa). The domain II stretch occupies residues 66–144; sequence SLDDRETFRT…GRAPAAGLAP (79 aa). Residues 145-155 are flexible linker; the sequence is SVPIPGGVAGD. The segment at 155–202 is domain III; the sequence is DVVAGLTNLGYPEPEARQVAAEVLEAEPDLDVAAALRQALKRLASAKK.

This sequence belongs to the RuvA family. Homotetramer. Forms an RuvA(8)-RuvB(12)-Holliday junction (HJ) complex. HJ DNA is sandwiched between 2 RuvA tetramers; dsDNA enters through RuvA and exits via RuvB. An RuvB hexamer assembles on each DNA strand where it exits the tetramer. Each RuvB hexamer is contacted by two RuvA subunits (via domain III) on 2 adjacent RuvB subunits; this complex drives branch migration. In the full resolvosome a probable DNA-RuvA(4)-RuvB(12)-RuvC(2) complex forms which resolves the HJ.

The protein resides in the cytoplasm. Functionally, the RuvA-RuvB-RuvC complex processes Holliday junction (HJ) DNA during genetic recombination and DNA repair, while the RuvA-RuvB complex plays an important role in the rescue of blocked DNA replication forks via replication fork reversal (RFR). RuvA specifically binds to HJ cruciform DNA, conferring on it an open structure. The RuvB hexamer acts as an ATP-dependent pump, pulling dsDNA into and through the RuvAB complex. HJ branch migration allows RuvC to scan DNA until it finds its consensus sequence, where it cleaves and resolves the cruciform DNA. In Solidesulfovibrio magneticus (strain ATCC 700980 / DSM 13731 / RS-1) (Desulfovibrio magneticus), this protein is Holliday junction branch migration complex subunit RuvA.